The sequence spans 130 residues: Small ribosomal subunit protein uS8 (130 aa).

It belongs to the universal ribosomal protein uS8 family. As to quaternary structure, part of the 30S ribosomal subunit. Contacts proteins S5 and S12.

One of the primary rRNA binding proteins, it binds directly to 16S rRNA central domain where it helps coordinate assembly of the platform of the 30S subunit. The chain is Small ribosomal subunit protein uS8 from Pseudomonas putida (strain ATCC 700007 / DSM 6899 / JCM 31910 / BCRC 17059 / LMG 24140 / F1).